Consider the following 82-residue polypeptide: Histidine-rich protein (82 aa).

This chain is Histidine-rich protein, found in Plasmodium falciparum (isolate fcm17 / Senegal).